Consider the following 245-residue polypeptide: Enolase-phosphatase E1 (245 aa).

Residues Asp14 and Glu16 each contribute to the Mg(2+) site. Substrate is bound by residues Ser141–Ser142 and Lys175. Mg(2+) is bound at residue Asp200.

The protein belongs to the HAD-like hydrolase superfamily. MasA/MtnC family. As to quaternary structure, monomer. Mg(2+) is required as a cofactor.

The protein localises to the cytoplasm. It localises to the nucleus. It carries out the reaction 5-methylsulfanyl-2,3-dioxopentyl phosphate + H2O = 1,2-dihydroxy-5-(methylsulfanyl)pent-1-en-3-one + phosphate. It functions in the pathway amino-acid biosynthesis; L-methionine biosynthesis via salvage pathway; L-methionine from S-methyl-5-thio-alpha-D-ribose 1-phosphate: step 3/6. The protein operates within amino-acid biosynthesis; L-methionine biosynthesis via salvage pathway; L-methionine from S-methyl-5-thio-alpha-D-ribose 1-phosphate: step 4/6. Its function is as follows. Bifunctional enzyme that catalyzes the enolization of 2,3-diketo-5-methylthiopentyl-1-phosphate (DK-MTP-1-P) into the intermediate 2-hydroxy-3-keto-5-methylthiopentenyl-1-phosphate (HK-MTPenyl-1-P), which is then dephosphorylated to form the acireductone 1,2-dihydroxy-3-keto-5-methylthiopentene (DHK-MTPene). The polypeptide is Enolase-phosphatase E1 (Drosophila grimshawi (Hawaiian fruit fly)).